A 432-amino-acid chain; its full sequence is MSKRKSKDLCLPVGECISKVHGILRQRLFQHHGKPFGVDSQHKHLVELLKRTVIHGESNSALIIGPRGSGKSMLLKGALEDIFGMKQMKETALQVNLNGLLQTTDKIALKEITRQLHLENVVGDRVFGSFAENLSFLLEALKTGDRKSSCPVLFVLDEFDLFAHHKNQTLLYNLFDIAQSAQTPVAVIGLTCRLDVMELLEKRVKSRFSHRQIHLLNSFSFSQYLQIFQEKLSLPASFPDSQFAEKWNESIKSLVESKLVEDVLQKQYNASKDVRSLHMLMLLAVCRVNVSHPHITAADFLEVFRLRNQDSKANILHGVSVLELCLIIAMKHLQDIYDGEPFNFQMVHNEFQKFIQRKAHSVYNFEKAVVIKAFEHLHQLELIKPMEGLSVRTQKEYRLMKLLLDNTQIVEALQKYPNCPTDVKQWAMSSLS.

Residue 65-72 participates in ATP binding; that stretch reads GPRGSGKS.

This sequence belongs to the ORC4 family. In terms of assembly, ORC is composed of six subunits.

It is found in the nucleus. Component of the origin recognition complex (ORC) that binds origins of replication. DNA-binding is ATP-dependent, however specific DNA sequences that define origins of replication have not been identified so far. ORC is required to assemble the pre-replication complex necessary to initiate DNA replication. This Xenopus laevis (African clawed frog) protein is Origin recognition complex subunit 4 (orc4).